Here is a 244-residue protein sequence, read N- to C-terminus: Pyridoxine 5'-phosphate synthase (244 aa).

Asn-12 provides a ligand contact to 3-amino-2-oxopropyl phosphate. 14 to 15 is a 1-deoxy-D-xylulose 5-phosphate binding site; sequence DH. Arg-23 provides a ligand contact to 3-amino-2-oxopropyl phosphate. The active-site Proton acceptor is the His-48. 2 residues coordinate 1-deoxy-D-xylulose 5-phosphate: Arg-50 and His-55. The Proton acceptor role is filled by Glu-75. Residue Thr-105 participates in 1-deoxy-D-xylulose 5-phosphate binding. His-196 (proton donor) is an active-site residue. 3-amino-2-oxopropyl phosphate contacts are provided by residues Gly-197 and 218 to 219; that span reads GH.

The protein belongs to the PNP synthase family. As to quaternary structure, homooctamer; tetramer of dimers.

It is found in the cytoplasm. The catalysed reaction is 3-amino-2-oxopropyl phosphate + 1-deoxy-D-xylulose 5-phosphate = pyridoxine 5'-phosphate + phosphate + 2 H2O + H(+). Its pathway is cofactor biosynthesis; pyridoxine 5'-phosphate biosynthesis; pyridoxine 5'-phosphate from D-erythrose 4-phosphate: step 5/5. Its function is as follows. Catalyzes the complicated ring closure reaction between the two acyclic compounds 1-deoxy-D-xylulose-5-phosphate (DXP) and 3-amino-2-oxopropyl phosphate (1-amino-acetone-3-phosphate or AAP) to form pyridoxine 5'-phosphate (PNP) and inorganic phosphate. The polypeptide is Pyridoxine 5'-phosphate synthase (Alcanivorax borkumensis (strain ATCC 700651 / DSM 11573 / NCIMB 13689 / SK2)).